Consider the following 525-residue polypeptide: GMP synthase [glutamine-hydrolyzing] (525 aa).

The Glutamine amidotransferase type-1 domain maps to 9–207; it reads RILILDFGSQ…VRDICQCEAL (199 aa). C86 functions as the Nucleophile in the catalytic mechanism. Active-site residues include H181 and E183. Positions 208 to 400 constitute a GMPS ATP-PPase domain; that stretch reads WTPAKIIDDA…LGLPYDMLYR (193 aa). 235–241 is an ATP binding site; it reads SGGVDSS.

In terms of assembly, homodimer.

It catalyses the reaction XMP + L-glutamine + ATP + H2O = GMP + L-glutamate + AMP + diphosphate + 2 H(+). It participates in purine metabolism; GMP biosynthesis; GMP from XMP (L-Gln route): step 1/1. In terms of biological role, catalyzes the synthesis of GMP from XMP. The sequence is that of GMP synthase [glutamine-hydrolyzing] from Escherichia coli O127:H6 (strain E2348/69 / EPEC).